The chain runs to 59 residues: Large ribosomal subunit protein bL32 (59 aa).

The disordered stretch occupies residues 1 to 23 (MAVQQNKKSPSKRGMHRSHDFLT).

Belongs to the bacterial ribosomal protein bL32 family.

The polypeptide is Large ribosomal subunit protein bL32 (Burkholderia multivorans (strain ATCC 17616 / 249)).